A 226-amino-acid polypeptide reads, in one-letter code: MRASREGKHISGGERLVSEEKIEEAVLELLRKALTHENGKPDFINIKIEKIDKVNYIKALPIKTITCKNKKEAREVAKKILLEEGIPEEVVEKAFKIIDKGGMRGAAILNLNGERLEPDRERGVRVKNIDTSERLKEKILKEGLGTERTVDAIAIASKVIRLGIIAELCTSDNKSYTTGYVATKKGYFRITNLKNINEPGGRVFFVKDIDEELIKRLEEEAYIIDL.

The protein belongs to the BioW family. Homodimer. It depends on Mg(2+) as a cofactor.

It carries out the reaction heptanedioate + ATP + CoA = 6-carboxyhexanoyl-CoA + AMP + diphosphate. It participates in metabolic intermediate metabolism; pimeloyl-CoA biosynthesis; pimeloyl-CoA from pimelate: step 1/1. Catalyzes the transformation of pimelate into pimeloyl-CoA with concomitant hydrolysis of ATP to AMP. This chain is 6-carboxyhexanoate--CoA ligase, found in Methanocaldococcus infernus (strain DSM 11812 / JCM 15783 / ME).